We begin with the raw amino-acid sequence, 134 residues long: Small ribosomal subunit protein uS11 (134 aa).

This sequence belongs to the universal ribosomal protein uS11 family. In terms of assembly, part of the 30S ribosomal subunit. Interacts with proteins S7 and S18. Binds to IF-3.

Its function is as follows. Located on the platform of the 30S subunit, it bridges several disparate RNA helices of the 16S rRNA. Forms part of the Shine-Dalgarno cleft in the 70S ribosome. This Janthinobacterium sp. (strain Marseille) (Minibacterium massiliensis) protein is Small ribosomal subunit protein uS11.